Reading from the N-terminus, the 327-residue chain is ATP-dependent 6-phosphofructokinase (327 aa).

ATP is bound by residues G12, 73-74, and 103-106; these read RL and GDGS. D104 provides a ligand contact to Mg(2+). Residue 126-128 participates in substrate binding; that stretch reads TID. Catalysis depends on D128, which acts as the Proton acceptor. R155 contacts ADP. Substrate is bound by residues R163 and 170 to 172; that span reads MGH. Residues 186-188 and 214-216 contribute to the ADP site; these read GAD and KRS. Substrate contacts are provided by residues E223, R245, and 251 to 254; that span reads HTQR.

The protein belongs to the phosphofructokinase type A (PFKA) family. ATP-dependent PFK group I subfamily. Prokaryotic clade 'B1' sub-subfamily. In terms of assembly, homotetramer. Mg(2+) serves as cofactor.

It localises to the cytoplasm. The catalysed reaction is beta-D-fructose 6-phosphate + ATP = beta-D-fructose 1,6-bisphosphate + ADP + H(+). It participates in carbohydrate degradation; glycolysis; D-glyceraldehyde 3-phosphate and glycerone phosphate from D-glucose: step 3/4. Its activity is regulated as follows. Allosterically activated by ADP and other diphosphonucleosides, and allosterically inhibited by phosphoenolpyruvate. Catalyzes the phosphorylation of D-fructose 6-phosphate to fructose 1,6-bisphosphate by ATP, the first committing step of glycolysis. This Spiroplasma citri protein is ATP-dependent 6-phosphofructokinase.